A 111-amino-acid chain; its full sequence is Cell division protein FtsB (111 aa).

At 1 to 3 (MGK) the chain is on the cytoplasmic side. Residues 4-21 (LTLLLLILLGWLQYSLWL) traverse the membrane as a helical segment. Over 22–111 (GKNGIHDYVR…TNTSSNNTQR (90 aa)) the chain is Periplasmic. Residues 33–63 (KDDVVVQQGNNAKLKDRNEQLFAEIDDLNGG) adopt a coiled-coil conformation. The interval 88-111 (VPESNHRNANTPSSTNTSSNNTQR) is disordered. Residues 97-111 (NTPSSTNTSSNNTQR) are compositionally biased toward low complexity.

The protein belongs to the FtsB family. Part of a complex composed of FtsB, FtsL and FtsQ.

It localises to the cell inner membrane. Its function is as follows. Essential cell division protein. May link together the upstream cell division proteins, which are predominantly cytoplasmic, with the downstream cell division proteins, which are predominantly periplasmic. This Pectobacterium atrosepticum (strain SCRI 1043 / ATCC BAA-672) (Erwinia carotovora subsp. atroseptica) protein is Cell division protein FtsB.